A 539-amino-acid chain; its full sequence is Chaperonin GroEL (539 aa).

ATP is bound by residues 29-32 (TLGP), 86-90 (DGTTT), G413, 476-478 (NAA), and D492.

This sequence belongs to the chaperonin (HSP60) family. Forms a cylinder of 14 subunits composed of two heptameric rings stacked back-to-back. Interacts with the co-chaperonin GroES.

The protein localises to the cytoplasm. The catalysed reaction is ATP + H2O + a folded polypeptide = ADP + phosphate + an unfolded polypeptide.. Together with its co-chaperonin GroES, plays an essential role in assisting protein folding. The GroEL-GroES system forms a nano-cage that allows encapsulation of the non-native substrate proteins and provides a physical environment optimized to promote and accelerate protein folding. The polypeptide is Chaperonin GroEL (Macrococcus caseolyticus (strain JCSC5402) (Macrococcoides caseolyticum)).